A 264-amino-acid chain; its full sequence is Orotidine 5'-phosphate decarboxylase (264 aa).

Substrate contacts are provided by residues Asp-40, 62 to 64 (KTH), 93 to 102 (DRKFADIGNT), Tyr-214, and Arg-233. The active-site Proton donor is the Lys-95.

The protein belongs to the OMP decarboxylase family.

The enzyme catalyses orotidine 5'-phosphate + H(+) = UMP + CO2. It participates in pyrimidine metabolism; UMP biosynthesis via de novo pathway; UMP from orotate: step 2/2. This Schizosaccharomyces pombe (strain 972 / ATCC 24843) (Fission yeast) protein is Orotidine 5'-phosphate decarboxylase (ura4).